The primary structure comprises 995 residues: UPF0182 protein MMAR_1371 (995 aa).

7 helical membrane passes run 18–38, 63–83, 113–133, 175–195, 210–230, 259–279, and 287–307; these read VLIL…RLID, FLVF…GLAL, LFGI…AQSY, FVAI…FGGI, IQLV…YWLD, KLIL…AIVL, and IGLV…PMIV. Positions 900-948 are disordered; sequence AATGIQPTEGGAPANVPPNNAPSPEALPGTPPSPPTAVPPAPEASVTLS. Residues 928-941 are compositionally biased toward pro residues; that stretch reads GTPPSPPTAVPPAP.

It belongs to the UPF0182 family.

The protein resides in the cell membrane. The sequence is that of UPF0182 protein MMAR_1371 from Mycobacterium marinum (strain ATCC BAA-535 / M).